A 473-amino-acid chain; its full sequence is Cyprosin (473 aa).

The propeptide at 1–33 is activation peptide; sequence LKKRKVNILNHPGEHAGSNDANARRKYGVRGNF. In terms of domain architecture, Peptidase A1 spans 51–470; the sequence is YFGEIGIGTP…DYGNLRVGFA (420 aa). Aspartate 69 is an active-site residue. 2 cysteine pairs are disulfide-bonded: cysteine 82–cysteine 88 and cysteine 247–cysteine 251. Aspartate 256 is a catalytic residue. Positions 281-384 constitute a Saposin B-type domain; sequence VMSQQCKSLV…DKLCERLPSP (104 aa). 4 cysteine pairs are disulfide-bonded: cysteine 286/cysteine 378, cysteine 311/cysteine 350, cysteine 317/cysteine 347, and cysteine 392/cysteine 429. An N-linked (GlcNAc...) asparagine glycan is attached at asparagine 364.

It belongs to the peptidase A1 family. Mostly present in the violet parts of styles and corollas of mature flowers.

The protein is Cyprosin (CYPRO1) of Cynara cardunculus (Cardoon).